The sequence spans 391 residues: Cytochrome b (391 aa).

Helical transmembrane passes span 33-53 (FGSL…FLAM), 77-98 (WLIR…YLHI), 113-133 (WSAG…GYVL), and 178-198 (FFAF…VHLL). Heme b is bound by residues His83 and His97. Residues His182 and His196 each coordinate heme b. Residue His201 participates in a ubiquinone binding. 4 helical membrane-spanning segments follow: residues 226–246 (YKDL…VLFI), 288–308 (LGGV…PILH), 320–340 (LAQI…WIGG), and 347–367 (FIII…VFFP).

It belongs to the cytochrome b family. The cytochrome bc1 complex contains 3 respiratory subunits (MT-CYB, CYC1 and UQCRFS1), 2 core proteins (UQCRC1 and UQCRC2) and probably 6 low-molecular weight proteins. Heme b is required as a cofactor.

It localises to the mitochondrion inner membrane. Its function is as follows. Component of the ubiquinol-cytochrome c reductase complex (complex III or cytochrome b-c1 complex) that is part of the mitochondrial respiratory chain. The b-c1 complex mediates electron transfer from ubiquinol to cytochrome c. Contributes to the generation of a proton gradient across the mitochondrial membrane that is then used for ATP synthesis. The polypeptide is Cytochrome b (mt-cyb) (Kryptolebias marmoratus (Mangrove killifish)).